The following is a 484-amino-acid chain: Putative transporter B0252.3 (484 aa).

A run of 11 helical transmembrane segments spans residues 43–63 (ILTCILVCGLAWSPLAFTGLC), 95–115 (STTTFYMVGNMIGGMFIPPLA), 121–141 (LPVFVATVLLMAVGGMISAFS), 144–164 (IMMFCIMRMIHGIFYTAAGLA), 183–203 (VYFGVMWVVGACFLGLLAYIL), 208–228 (YLMFCISVPNIFVALLIYMTV), 286–306 (MFIVYVLVMTYIWIVDTFIYF), 321–341 (LNFVLMSLVEAPAYIFSPIFM), 348–368 (VLISGTHIIAGLSFLGIVLSS), 373–393 (IHFWLLGKFAISCSFMSIYMF), and 433–453 (LAPAITLSLIAVSGGLLTLIL).

This sequence belongs to the major facilitator superfamily. Sugar transporter (TC 2.A.1.1) family.

It localises to the membrane. The protein is Putative transporter B0252.3 of Caenorhabditis elegans.